A 125-amino-acid chain; its full sequence is Methylglyoxal synthase (125 aa).

The region spanning 1–125 is the MGS-like domain; that stretch reads MTQRLRIALI…TAEKLVRALD (125 aa). Substrate contacts are provided by residues H12, K16, 38-41, and 59-60; these read TGTT and SG. D65 acts as the Proton donor/acceptor in catalysis. Residue H92 coordinates substrate.

This sequence belongs to the methylglyoxal synthase family.

The enzyme catalyses dihydroxyacetone phosphate = methylglyoxal + phosphate. Functionally, catalyzes the formation of methylglyoxal from dihydroxyacetone phosphate. The chain is Methylglyoxal synthase from Brucella abortus (strain S19).